A 468-amino-acid polypeptide reads, in one-letter code: Ribulose bisphosphate carboxylase large chain (468 aa).

At lysine 5 the chain carries N6,N6,N6-trimethyllysine. Residues asparagine 114 and threonine 164 each contribute to the substrate site. Lysine 166 acts as the Proton acceptor in catalysis. A substrate-binding site is contributed by lysine 168. Mg(2+) is bound by residues lysine 192, aspartate 194, and glutamate 195. N6-carboxylysine is present on lysine 192. Histidine 285 acts as the Proton acceptor in catalysis. Substrate contacts are provided by arginine 286, histidine 318, and serine 370.

It belongs to the RuBisCO large chain family. Type I subfamily. In terms of assembly, heterohexadecamer of 8 large chains and 8 small chains; disulfide-linked. The disulfide link is formed within the large subunit homodimers. Mg(2+) is required as a cofactor. The disulfide bond which can form in the large chain dimeric partners within the hexadecamer appears to be associated with oxidative stress and protein turnover.

It localises to the plastid. The protein localises to the chloroplast. The catalysed reaction is 2 (2R)-3-phosphoglycerate + 2 H(+) = D-ribulose 1,5-bisphosphate + CO2 + H2O. It catalyses the reaction D-ribulose 1,5-bisphosphate + O2 = 2-phosphoglycolate + (2R)-3-phosphoglycerate + 2 H(+). Functionally, ruBisCO catalyzes two reactions: the carboxylation of D-ribulose 1,5-bisphosphate, the primary event in carbon dioxide fixation, as well as the oxidative fragmentation of the pentose substrate in the photorespiration process. Both reactions occur simultaneously and in competition at the same active site. This is Ribulose bisphosphate carboxylase large chain from Anthocercis viscosa (Sticky tailflower).